A 54-amino-acid chain; its full sequence is Low temperature-induced protein lt101.2 (54 aa).

A run of 2 helical transmembrane segments spans residues alanine 2 to leucine 22 and leucine 34 to alanine 54.

Belongs to the UPF0057 (PMP3) family.

It is found in the membrane. The polypeptide is Low temperature-induced protein lt101.2 (LT101.2) (Hordeum vulgare (Barley)).